The primary structure comprises 320 residues: MPSLDNTADEKPAIDPILLKVLDAVPFRLSIDDGIEAVRQRLRDLPRQPVHPELRVVDLAIDGPAGPIGTRIYWPPTCPDQAEAPVVLYFHGGGFVMGDLDTHDGTCRQHAVGADAIVVSVDYRLAPEHPYPAAIEDAWAATRWVAEHGRQVGADLGRIAVAGDSAGGTIAAVIAQRARDMGGPPIVFQLLWYPSTLWDQSLPSLAENADAPILDVKAIAAFSRWYAGEIDLHNPPAPMAPGRAENLADLPPAYIAVAGYDPLRDDGIRYGELLAAAGVPVEVHNAQTLVHGYVGYAGVVPAATEATNRGLVALRVVLHG.

Residues serine 165, aspartate 261, and histidine 291 contribute to the active site.

Belongs to the 'GDXG' lipolytic enzyme family.

The enzyme catalyses a fatty acid ester + H2O = an aliphatic alcohol + a fatty acid + H(+). It carries out the reaction a butanoate ester + H2O = an aliphatic alcohol + butanoate + H(+). The catalysed reaction is an octanoate ester + H2O = an aliphatic alcohol + octanoate + H(+). It catalyses the reaction decanoate ester + H2O = decanoate + an aliphatic alcohol + H(+). The enzyme catalyses an acetyl ester + H2O = an aliphatic alcohol + acetate + H(+). It carries out the reaction a dodecanoate ester + H2O = an aliphatic alcohol + dodecanoate + H(+). Its activity is regulated as follows. Inhibited by ionic detergents SDS (anions) and CTAB (cationic). Strongly inhibited by Zn(2+). Its function is as follows. Esterase that can hydrolyze short-chain esters with the carbon chain containing 2 to 12 carbon atoms. In vitro, pNP-butyrate is the preferred substrate. This Mycobacterium tuberculosis (strain ATCC 25618 / H37Rv) protein is Esterase LipI.